A 458-amino-acid chain; its full sequence is Flavonol 3-O-glucosyltransferase UGT76E12 (458 aa).

Histidine 25 acts as the Proton acceptor in catalysis. Position 25 (histidine 25) interacts with an anthocyanidin. Aspartate 118 acts as the Charge relay in catalysis. UDP-alpha-D-glucose contacts are provided by threonine 140, alanine 339, glutamine 341, histidine 356, tryptophan 359, asparagine 360, serine 361, and glutamate 364. Glycine 379 contacts an anthocyanidin. UDP-alpha-D-glucose-binding residues include aspartate 380 and glutamine 381.

Belongs to the UDP-glycosyltransferase family.

The enzyme catalyses a flavonol + UDP-alpha-D-glucose = a flavonol 3-O-beta-D-glucoside + UDP + H(+). The catalysed reaction is a 7-O-hydroxy-flavonol + UDP-alpha-D-glucose = a flavonol 7-O-beta-D-glucoside + UDP + H(+). In terms of biological role, possesses quercetin 3-O-glucosyltransferase and 7-O-glucosyltransferase activities in vitro. This Arabidopsis thaliana (Mouse-ear cress) protein is Flavonol 3-O-glucosyltransferase UGT76E12.